Here is a 575-residue protein sequence, read N- to C-terminus: Muellerian-inhibiting factor (575 aa).

A signal peptide spans 1–20; the sequence is MQGPSLSQLVLVLMGALLEA. Positions 21–466 are excised as a propeptide; sequence GTPREEVSST…ERSGPARAQR (446 aa). Asparagine 78 and asparagine 343 each carry an N-linked (GlcNAc...) asparagine glycan. 3 disulfide bridges follow: cysteine 477–cysteine 541, cysteine 503–cysteine 572, and cysteine 507–cysteine 574.

Belongs to the TGF-beta family. In terms of assembly, homodimer; disulfide-linked. In terms of processing, preproprotein is proteolytically processed to generate N- and C-terminal cleavage products that homodimerize and associate to form a biologically active non-covalent complex. Binding of the non-covalent complex to AMHR2 induces dissociation of the pro-region from the mature C-terminal dimer. The N-terminal portion of the protein, despite having no intrinsic activity, has the role of amplifying the activity of the C-terminus. As to expression, detected in fetal Sertoli cells. Expressed in granulosa cells of growing follicles but also in theca cells of preovulatory follicles and corpora lutea (at protein level).

It is found in the secreted. Its function is as follows. Plays an important role in several reproductive functions. Induces Muellerian duct regression during male fetal sexual differentiation and plays a role in Leydig cell differentiation and function. In female acts as a negative regulator of the primordial to primary follicle transition and decreases FSH sensitivity of growing follicles. AMH signals by binding to a specific type-II receptor, AMHR2, that heterodimerizes with type-I receptors (ACVR1 and BMPR1A), and recruiting SMAD proteins that are translocated to the nucleus to regulate target gene expression. The protein is Muellerian-inhibiting factor (AMH) of Sus scrofa (Pig).